Here is a 359-residue protein sequence, read N- to C-terminus: uncharacterized protein (359 aa).

The region spanning 43-309 (YHLIRKLGSG…VLDFLGDDWG (267 aa)) is the Protein kinase domain. ATP contacts are provided by residues 49 to 57 (LGSGSYGRV) and Lys-72. The Proton acceptor role is filled by Asp-163. The tract at residues 314 to 359 (REGPGVLGSAVSYEDREEGGSSLEEWTDEGDDSKSGGRTGTDGGAP) is disordered. A compositionally biased stretch (gly residues) spans 350-359 (GRTGTDGGAP).

The protein belongs to the protein kinase superfamily. Ser/Thr protein kinase family. STKL subfamily.

The catalysed reaction is L-seryl-[protein] + ATP = O-phospho-L-seryl-[protein] + ADP + H(+). It catalyses the reaction L-threonyl-[protein] + ATP = O-phospho-L-threonyl-[protein] + ADP + H(+). This is an uncharacterized protein from Homo sapiens (Human).